The primary structure comprises 324 residues: Tyrosine--tRNA ligase (324 aa).

Y36 is a binding site for L-tyrosine. The 'HIGH' region signature appears at 41–49 (PSGKVHLGH). The L-tyrosine site is built by Y158, Q162, D165, and Q180. The 'KMSKS' region motif lies at 215–219 (KMSSS). S218 serves as a coordination point for ATP.

It belongs to the class-I aminoacyl-tRNA synthetase family. TyrS type 3 subfamily. In terms of assembly, homodimer.

Its subcellular location is the cytoplasm. It catalyses the reaction tRNA(Tyr) + L-tyrosine + ATP = L-tyrosyl-tRNA(Tyr) + AMP + diphosphate + H(+). Functionally, catalyzes the attachment of tyrosine to tRNA(Tyr) in a two-step reaction: tyrosine is first activated by ATP to form Tyr-AMP and then transferred to the acceptor end of tRNA(Tyr). The chain is Tyrosine--tRNA ligase from Methanopyrus kandleri (strain AV19 / DSM 6324 / JCM 9639 / NBRC 100938).